We begin with the raw amino-acid sequence, 576 residues long: Alpha-bisabolol synthase (576 aa).

5 residues coordinate (2E,6E)-farnesyl diphosphate: Arg-286, Asp-323, Asp-327, Arg-466, and Asn-469. Mg(2+) contacts are provided by Asp-323 and Asp-327. The short motif at 323–327 (DDVYD) is the DDXXD motif element. 3 residues coordinate Mg(2+): Asn-469, Thr-473, and Glu-477.

It belongs to the terpene synthase family. Tpsb subfamily. The cofactor is Mg(2+). Requires Mn(2+) as cofactor.

In terms of biological role, produces a mixture of beta-bisabolene and alpha-bisabolol, along with traces of alpha-bisabolene and farnesene isomers from (2E,6E)-farnesyl diphosphate in fragrance biosynthesis. This Santalum spicatum (Australian sandalwood) protein is Alpha-bisabolol synthase.